A 1275-amino-acid chain; its full sequence is Serine/threonine-protein kinase ULK4 (1275 aa).

Positions 4–280 constitute a Protein kinase domain; the sequence is FILYEEIGRG…WTRLLQHSFW (277 aa). Asp121 (proton acceptor) is an active-site residue. 2 disordered regions span residues 299-346 and 359-393; these read SRNT…EFRP and FLLS…SPLT. Positions 336–346 are enriched in basic and acidic residues; it reads FRLENPTEFRP. Composition is skewed to polar residues over residues 363–373 and 384–393; these read SRPTPRTSTAV and CSPQKTSPLT. HEAT repeat units follow at residues 727-765, 842-880, 926-964, 1025-1063, 1151-1189, and 1213-1253; these read LIQE…YNRE, LKMC…ILSH, STVV…LLVN, LVEE…NLVA, NRPL…LYGG, and PKEQ…LAPG.

Belongs to the protein kinase superfamily. Ser/Thr protein kinase family. APG1/unc-51/ULK1 subfamily.

The enzyme catalyses L-seryl-[protein] + ATP = O-phospho-L-seryl-[protein] + ADP + H(+). It catalyses the reaction L-threonyl-[protein] + ATP = O-phospho-L-threonyl-[protein] + ADP + H(+). In terms of biological role, may be involved in the remodeling of cytoskeletal components, such as alpha-tubulin, and in this way regulates neurite branching and elongation, as well as cell motility. The protein is Serine/threonine-protein kinase ULK4 (ULK4) of Pongo abelii (Sumatran orangutan).